We begin with the raw amino-acid sequence, 715 residues long: Interferon-induced GTP-binding protein Mx2 (715 aa).

Basic residues predominate over residues 1 to 14 (MSKAHKSWPHRRRN). Disordered stretches follow at residues 1 to 24 (MSKAHKSWPHRRRNQFSSQRSLKK) and 69 to 88 (NNQPLPGNTSQPRAKGPENN). The span at 69 to 80 (NNQPLPGNTSQP) shows a compositional bias: polar residues. The Dynamin-type G domain occupies 115–387 (DLALPAIAVI…LITHIQKSLP (273 aa)). Positions 125-132 (GDQSSGKS) are G1 motif. 125–132 (GDQSSGKS) serves as a coordination point for GTP. A G2 motif region spans residues 150 to 152 (VTR). Residues 225 to 228 (DLPG) are G3 motif. GTP is bound by residues 225-229 (DLPGI) and 294-297 (TKPD). Residues 294 to 297 (TKPD) form a G4 motif region. The G5 motif stretch occupies residues 326–329 (KCRG). The GED domain maps to 623 to 714 (FNEIGVHLNA…ALCQFSSKEI (92 aa)).

The protein belongs to the TRAFAC class dynamin-like GTPase superfamily. Dynamin/Fzo/YdjA family.

Its subcellular location is the cytoplasm. The protein localises to the nucleus. Functionally, interferon-induced dynamin-like GTPase with antiviral activity. This chain is Interferon-induced GTP-binding protein Mx2 (MX2), found in Macaca mulatta (Rhesus macaque).